The following is a 101-amino-acid chain: Small ubiquitin-related modifier 1 (101 aa).

Ser-2 carries the post-translational modification N-acetylserine. The residue at position 2 (Ser-2) is a Phosphoserine. Lys-7 is covalently cross-linked (Glycyl lysine isopeptide (Lys-Gly) (interchain with G-Cter in SUMO1); alternate). Lys-7 participates in a covalent cross-link: Glycyl lysine isopeptide (Lys-Gly) (interchain with G-Cter in SUMO2); alternate. Ser-9 bears the Phosphoserine mark. Residues Lys-16, Lys-17, and Lys-23 each participate in a glycyl lysine isopeptide (Lys-Gly) (interchain with G-Cter in SUMO2) cross-link. A Ubiquitin-like domain is found at 20 to 97 (EYIKLKVIGQ…IEVYQEQTGG (78 aa)). Lys-25 participates in a covalent cross-link: Glycyl lysine isopeptide (Lys-Gly) (interchain with G-Cter in SUMO1). At Ser-32 the chain carries Phosphoserine. Residues Lys-37, Lys-39, Lys-45, and Lys-46 each participate in a glycyl lysine isopeptide (Lys-Gly) (interchain with G-Cter in SUMO2) cross-link. Residue Gly-97 forms a Glycyl lysine isopeptide (Gly-Lys) (interchain with K-? in acceptor proteins) linkage. Residues 98 to 101 (HSNV) constitute a propeptide that is removed on maturation.

Belongs to the ubiquitin family. SUMO subfamily. In terms of assembly, covalently attached to KCNB1; UBE2I increases cross-linking with KCNB1 and PIAS1 decreases cross-links with KCNB1. Interacts with SAE2, RANBP2, PIAS1 and PIAS2. Interacts with PRKN. Covalently attached to a number of proteins such as IKFZ1, PML, RANGAP1, HIPK2, SP100, p53, p73-alpha, MDM2, JUN, DNMT3B and TDG. Also interacts with HIF1A, HIPK2, HIPK3, CHD3, EXOSC9, RAD51 and RAD52. Interacts with USP25 (via ts SIM domain); the interaction weakly sumoylates USP25. Interacts with SIMC1, CASP8AP2, RNF111 and SOBP (via SIM domains). Interacts with BHLHE40/DEC1. Interacts with RWDD3. Interacts with UBE2I/UBC9 and this interaction is enhanced in the presence of RWDD3. Interacts with MTA1. Interacts with SENP2. Interacts with HINT1. In terms of processing, cleavage of precursor form by SENP1 or SENP2 is necessary for function. Polymeric SUMO1 chains undergo polyubiquitination by RNF4.

The protein resides in the nucleus membrane. It localises to the nucleus speckle. Its subcellular location is the cytoplasm. The protein localises to the nucleus. It is found in the PML body. The protein resides in the cell membrane. Ubiquitin-like protein that can be covalently attached to proteins as a monomer or a lysine-linked polymer. Covalent attachment via an isopeptide bond to its substrates requires prior activation by the E1 complex SAE1-SAE2 and linkage to the E2 enzyme UBE2I, and can be promoted by E3 ligases such as PIAS1-4, RANBP2 or CBX4. This post-translational modification on lysine residues of proteins plays a crucial role in a number of cellular processes such as nuclear transport, DNA replication and repair, mitosis and signal transduction. Involved for instance in targeting RANGAP1 to the nuclear pore complex protein RANBP2. Covalently attached to the voltage-gated potassium channel KCNB1; this modulates the gating characteristics of KCNB1. Polymeric SUMO1 chains are also susceptible to polyubiquitination which functions as a signal for proteasomal degradation of modified proteins. May be involved in modified proteins. May also regulate a network of genes involved in palate development. Covalently attached to ZFHX3. The chain is Small ubiquitin-related modifier 1 (SUMO1) from Ictidomys tridecemlineatus (Thirteen-lined ground squirrel).